The following is a 92-amino-acid chain: MARSIWKGPFVDGYLIKKVQKLMESGKSEMIKTWSRRSTILPIFVGFTFSVHNGNKFIPVSVNEEMVGRKLGEFAPTRTFYGHGADKKVKRK.

It belongs to the universal ribosomal protein uS19 family.

Functionally, protein S19 forms a complex with S13 that binds strongly to the 16S ribosomal RNA. This chain is Small ribosomal subunit protein uS19, found in Rickettsia canadensis (strain McKiel).